The following is a 374-amino-acid chain: MDLKDGGGSERRGAAAGAGAGAAPLARQGSIYSLTFDEFQSTLGGMGGGLGKDFGSMNMDELLRSIWTAEESQAMASASAAAAAAEGGLQRQGSLTLPRTLSVKTVDEVWRDLEREASPGAAAADGGGGGGEQQQPRRQPTLGEMTLEEFLVRAGVVRENTAAAAAMVAAAAAPPVAPRSIPAVNNSSIFFGNYGGVNDAAAAAAGAMGFSPVGIGDPTMGNRLMSGVAGIGGGAITVAPVDTSVGQMDSAGKGDGDLSSPMAPVPYPFEGVIRGRRSGGNVEKVVERRQRRMIKNRESAARSRARKQAYTMELEAEVQKLKEQNMELQKKQEEIMEMQKNFFPEMQKNQVLEAVNNPYGQKKRCLRRTLTGPW.

Residues M1–G13 are compositionally biased toward basic and acidic residues. 2 disordered regions span residues M1–A23 and A117–L142. Over residues A14–A23 the composition is skewed to low complexity. Residues V286–N349 enclose the bZIP domain. The basic motif stretch occupies residues R288–K307. The segment at L314–I335 is leucine-zipper.

It belongs to the bZIP family. Interacts with VP1 (via N-terminus). As to expression, expressed in roots, leaves and embryos.

It is found in the nucleus. In terms of biological role, transcription activator that mediates abscisic acid (ABA) signaling. Binds specifically to the ABA-responsive element (ABRE) of the EMP1 and RAB16A gene promoters. The polypeptide is bZIP transcription factor TRAB1 (Oryza sativa subsp. japonica (Rice)).